A 148-amino-acid polypeptide reads, in one-letter code: 3-dehydroquinate dehydratase (148 aa).

Residue Tyr-23 is the Proton acceptor of the active site. 3 residues coordinate substrate: Asn-75, His-81, and Asp-88. Residue His-101 is the Proton donor of the active site. Residues 102–103 and Arg-112 each bind substrate; that span reads LS.

This sequence belongs to the type-II 3-dehydroquinase family. As to quaternary structure, homododecamer.

The catalysed reaction is 3-dehydroquinate = 3-dehydroshikimate + H2O. Its pathway is metabolic intermediate biosynthesis; chorismate biosynthesis; chorismate from D-erythrose 4-phosphate and phosphoenolpyruvate: step 3/7. Catalyzes a trans-dehydration via an enolate intermediate. This chain is 3-dehydroquinate dehydratase, found in Xanthomonas oryzae pv. oryzae (strain MAFF 311018).